Consider the following 425-residue polypeptide: Serine--tRNA ligase (425 aa).

233–235 contributes to the L-serine binding site; sequence TAE. Residue 264–266 coordinates ATP; sequence RAE. An L-serine-binding site is contributed by Glu-287. 351–354 is an ATP binding site; sequence EISS. L-serine is bound at residue Ser-387.

Belongs to the class-II aminoacyl-tRNA synthetase family. Type-1 seryl-tRNA synthetase subfamily. In terms of assembly, homodimer. The tRNA molecule binds across the dimer.

The protein resides in the cytoplasm. The catalysed reaction is tRNA(Ser) + L-serine + ATP = L-seryl-tRNA(Ser) + AMP + diphosphate + H(+). The enzyme catalyses tRNA(Sec) + L-serine + ATP = L-seryl-tRNA(Sec) + AMP + diphosphate + H(+). The protein operates within aminoacyl-tRNA biosynthesis; selenocysteinyl-tRNA(Sec) biosynthesis; L-seryl-tRNA(Sec) from L-serine and tRNA(Sec): step 1/1. Catalyzes the attachment of serine to tRNA(Ser). Is also able to aminoacylate tRNA(Sec) with serine, to form the misacylated tRNA L-seryl-tRNA(Sec), which will be further converted into selenocysteinyl-tRNA(Sec). The sequence is that of Serine--tRNA ligase from Clostridium perfringens (strain SM101 / Type A).